Here is a 1068-residue protein sequence, read N- to C-terminus: MLSSLGCLLLCGSITLALGNAQKLPKGKRPNLKVHINTTSDSILLKFLRPSPNVKLEGLLLGYGSNVSPNQYFPLPAEGKFTEAIVDAEPKYLIVVRPAPPPSQKKSCSGKTRSRKPLQLVVGTLTPSSVFLSWGFLINPHHDWTLPSHCPNDRFYTIRYREKDKEKKWIFQICPATETIVENLKPNTVYEFGVKDNVEGGIWSKIFNHKTVVGSKKVNGKIQSTYDQDHTVPAYVPRKLIPITIIKQVIQNVTHKDSAKSPEKAPLGGVILVHLIIPGLNETTVKLPASLMFEISDALKTQLAKNETLALPAESKTPEVEKISARPTTVTPETVPRSTKPTTSSALDVSETTLASSEKPWIVPTAKISEDSKVLQPQTATYDVFSSPTTSDEPEISDSYTATSDRILDSIPPKTSRTLEQPRATLAPSETPFVPQKLEIFTSPEMQPTTPAPQQTTSIPSTPKRRPRPKPPRTKPERTTSAGTITPKISKSPEPTWTTPAPGKTQFISLKPKIPLSPEVTHTKPAPKQTPRAPPKPKTSPRPRIPQTQPVPKVPQRVTAKPKTSPSPEVSYTTPAPKDVLLPHKPYPEVSQSEPAPLETRGIPFIPMISPSPSQEELQTTLEETDQSTQEPFTTKIPRTTELAKTTQAPHRFYTTVRPRTSDKPHIRPGVKQAPRPSGADRNVSVDSTHPTKKPGTRRPPLPPRPTHPRRKPLPPNNVTGKPGSAGIISSGPITTPPLRSTPRPTGTPLERIETDIKQPTVPASGEELENITDFSSSPTRETDPLGKPRFKGPHVRYIQKPDNSPCSITDSVKRFPKEEATEGNATSPPQNPPTNLTVVTVEGCPSFVILDWEKPLNDTVTEYEVISRENGSFSGKNKSIQMTNQTFSTVENLKPNTSYEFQVKPKNPLGEGPVSNTVAFSTESADPRVSEPVSAGRDAIWTERPFNSDSYSECKGKQYVKRTWYKKFVGVQLCNSLRYKIYLSDSLTGKFYNIGDQRGHGEDHCQFVDSFLDGRTGQQLTSDQLPIKEGYFRAVRQEPVQFGEIGGHTQINYVQWYECGTTIPGKW.

The signal sequence occupies residues 1-21 (MLSSLGCLLLCGSITLALGNA). The N-linked (GlcNAc...) asparagine glycan is linked to Asn37. Residues 116–214 (KPLQLVVGTL…KIFNHKTVVG (99 aa)) form the Fibronectin type-III 1 domain. Disordered stretches follow at residues 315-351 (SKTP…DVSE) and 384-811 (VFSS…SITD). The span at 326 to 339 (RPTTVTPETVPRST) shows a compositional bias: low complexity. Over residues 340 to 351 (KPTTSSALDVSE) the composition is skewed to polar residues. Over residues 447-462 (QPTTPAPQQTTSIPST) the composition is skewed to low complexity. The span at 463–473 (PKRRPRPKPPR) shows a compositional bias: basic residues. A compositionally biased stretch (polar residues) spans 482–499 (AGTITPKISKSPEPTWTT). The segment covering 532-544 (RAPPKPKTSPRPR) has biased composition (pro residues). Positions 562 to 574 (PKTSPSPEVSYTT) are enriched in polar residues. Composition is skewed to low complexity over residues 603 to 631 (IPFI…STQE) and 737 to 750 (PPLR…GTPL). Residues 802-811 (PDNSPCSITD) show a composition bias toward polar residues. The Fibronectin type-III 2 domain maps to 833–926 (PPTNLTVVTV…NTVAFSTESA (94 aa)).

Probably interacts with ABI3. As to expression, expressed in brain, heart, lung, liver, pancreas kidney and placenta.

It is found in the secreted. The protein is Target of Nesh-SH3 of Homo sapiens (Human).